A 694-amino-acid chain; its full sequence is Elongation factor G (694 aa).

The region spanning 8–284 (EKLRNIGIVA…AVIDFLPSPV (277 aa)) is the tr-type G domain. GTP is bound by residues 17-24 (AHIDAGKT), 81-85 (DTPGH), and 135-138 (NKMD).

It belongs to the TRAFAC class translation factor GTPase superfamily. Classic translation factor GTPase family. EF-G/EF-2 subfamily.

It is found in the cytoplasm. In terms of biological role, catalyzes the GTP-dependent ribosomal translocation step during translation elongation. During this step, the ribosome changes from the pre-translocational (PRE) to the post-translocational (POST) state as the newly formed A-site-bound peptidyl-tRNA and P-site-bound deacylated tRNA move to the P and E sites, respectively. Catalyzes the coordinated movement of the two tRNA molecules, the mRNA and conformational changes in the ribosome. The protein is Elongation factor G of Persephonella marina (strain DSM 14350 / EX-H1).